We begin with the raw amino-acid sequence, 121 residues long: Large ribosomal subunit protein uL14 (121 aa).

Belongs to the universal ribosomal protein uL14 family. In terms of assembly, part of the 50S ribosomal subunit. Forms a cluster with proteins L3 and L19. In the 70S ribosome, L14 and L19 interact and together make contacts with the 16S rRNA in bridges B5 and B8.

Binds to 23S rRNA. Forms part of two intersubunit bridges in the 70S ribosome. This chain is Large ribosomal subunit protein uL14, found in Mycoplasmopsis synoviae (strain 53) (Mycoplasma synoviae).